A 447-amino-acid chain; its full sequence is Putative vacuolar cation/proton exchanger 4 (447 aa).

The segment at 1–29 is disordered; the sequence is MDKSEMDKINGTNPESTDQAPSLASRPDE. Over 1 to 65 the chain is Cytoplasmic; that stretch reads MDKSEMDKIN…VNWGVFGSMK (65 aa). Residues 10–22 are compositionally biased toward polar residues; sequence NGTNPESTDQAPS. Residues 66–86 form a helical membrane-spanning segment; the sequence is IVFLKSKLNVLIPCGFLAIFL. At 87 to 93 the chain is on the extracellular side; it reads NYMTQRY. A helical transmembrane segment spans residues 94–114; sequence GWVFPLSMLGIIPLAERLGFA. Residues 115–122 are Cytoplasmic-facing; the sequence is TDWQISCE. Residues 123-143 form a helical membrane-spanning segment; that stretch reads VGRLLNSAFGNATELIISIHA. The tract at residues 132–167 is cation selection; it reads GNATELIISIHALSRGKLHVVQQCLLGSILSNLLLV. The Extracellular portion of the chain corresponds to 144-159; it reads LSRGKLHVVQQCLLGS. A helical transmembrane segment spans residues 160–180; the sequence is ILSNLLLVLGSAFFSGGLACG. At 181 to 190 the chain is on the cytoplasmic side; sequence KTMQTFSKAD. Residues 191-211 form a helical membrane-spanning segment; it reads AVVNSGLLLMAVMGLLIPAAL. Topologically, residues 212 to 224 are extracellular; the sequence is HYTHSEAQFGKSE. Residues 225–245 form a helical membrane-spanning segment; that stretch reads LALSRFSSCIMLVAYASYLYF. The Cytoplasmic portion of the chain corresponds to 246-286; it reads QLSNNRRRNEANVYPCMPLIKRRIQDDVDGNDDEVPEISKR. Residues 287-307 traverse the membrane as a helical segment; sequence EAISWIAIFIAWISMLSYYLV. At 308-318 the chain is on the extracellular side; that stretch reads DAIDGASKAWN. The chain crosses the membrane as a helical span at residues 319–339; sequence IPVAFISVVLLPVVGNSAGHA. Residues 333 to 368 form a cation selection region; it reads GNSAGHANAVMFAVKDKLDISLGVAIGSSIQISMFG. The Cytoplasmic portion of the chain corresponds to 340–353; sequence NAVMFAVKDKLDIS. Residues 354-374 traverse the membrane as a helical segment; that stretch reads LGVAIGSSIQISMFGIPFCVV. At 375–384 the chain is on the extracellular side; sequence MGWMMGKPMD. A helical membrane pass occupies residues 385 to 405; it reads LNFHLFETASLLTTVLVVAFL. The Cytoplasmic portion of the chain corresponds to 406–413; the sequence is LQDGTSNC. The chain crosses the membrane as a helical span at residues 414 to 434; it reads VKGLMLFLCYLIVAASFYVHA. Residues 435 to 447 lie on the Extracellular side of the membrane; the sequence is DPNSKASEKPPQN.

The protein belongs to the Ca(2+):cation antiporter (CaCA) (TC 2.A.19) family. Cation/proton exchanger (CAX) subfamily.

The protein resides in the vacuole membrane. Its function is as follows. Vacuolar cation/proton exchanger (CAX). Translocates Ca(2+) and other metal ions into vacuoles using the proton gradient formed by H(+)-ATPase and H(+)-pyrophosphatase. This Oryza sativa subsp. japonica (Rice) protein is Putative vacuolar cation/proton exchanger 4.